Reading from the N-terminus, the 515-residue chain is Maturase K (515 aa).

The protein belongs to the intron maturase 2 family. MatK subfamily.

The protein resides in the plastid. Its subcellular location is the chloroplast. In terms of biological role, usually encoded in the trnK tRNA gene intron. Probably assists in splicing its own and other chloroplast group II introns. In Pinus tabuliformis (Chinese red pine), this protein is Maturase K.